Reading from the N-terminus, the 1755-residue chain is Transposon Ty1-DR6 Gag-Pol polyprotein (1755 aa).

Composition is skewed to polar residues over residues 1–23 (MESQQLSQHSPISHGSACASVTS), 48–60 (TKANSQQTTTPAS), and 127–152 (QSQFPQYPSSVGTPLSTPSPESGNTF). Disordered regions lie at residues 1-93 (MESQ…MMTQ), 126-174 (PQSQ…PPPM), and 352-421 (GSRN…SKST). Residues 153–165 (TDSSSADSDMTST) show a composition bias toward low complexity. Residues 299-401 (NNGIHINNKV…NSKSKTARAH (103 aa)) are RNA-binding. Residues 402-418 (NVSTSNNSPSTDNDSIS) are compositionally biased toward low complexity. Phosphoserine is present on Ser-416. The active-site For protease activity; shared with dimeric partner is the Asp-461. Positions 583–640 (NVHTSESTRKYPYPFIHRMLAHANAQTIRYSLKNNTITYFNESDVDWSSAIDYQCPDC) are integrase-type zinc finger-like. Positions 660 to 835 (NSYEPFQYLH…AGLDISTLLP (176 aa)) constitute an Integrase catalytic domain. Mg(2+) is bound by residues Asp-671 and Asp-736. Disordered regions lie at residues 956 to 1087 (SKAV…ETEK), 1092 to 1111 (RSPSIDASPPENNSSHNIVP), and 1130 to 1187 (DLPL…DNET). Low complexity predominate over residues 960–969 (SPTDSTPPST). The segment covering 1005-1015 (STPQISNIEST) has biased composition (polar residues). The span at 1038 to 1053 (ESSHASKSKDFRHSDS) shows a compositional bias: basic and acidic residues. Polar residues-rich tracts occupy residues 1054–1082 (YSENETNHTNVPISSTGGTNNKTVPQISD) and 1101–1111 (PENNSSHNIVP). The Bipartite nuclear localization signal motif lies at 1178-1212 (KKRSLEDNETEIKVSRDTWNTKNMRSLEPPRSKKR). A Reverse transcriptase Ty1/copia-type domain is found at 1338–1476 (NNYYITQLDI…DILGLEIKYQ (139 aa)). Asp-1346, Asp-1427, Asp-1428, Asp-1610, Glu-1652, and Asp-1685 together coordinate Mg(2+). Residues 1610–1752 (DASYGNQPYY…IKTFKLLTNK (143 aa)) enclose the RNase H Ty1/copia-type domain.

The capsid protein forms a homotrimer, from which the VLPs are assembled. The protease is a homodimer, whose active site consists of two apposed aspartic acid residues. Initially, virus-like particles (VLPs) are composed of the structural unprocessed proteins Gag and Gag-Pol, and also contain the host initiator methionine tRNA (tRNA(i)-Met) which serves as a primer for minus-strand DNA synthesis, and a dimer of genomic Ty RNA. Processing of the polyproteins occurs within the particle and proceeds by an ordered pathway, called maturation. First, the protease (PR) is released by autocatalytic cleavage of the Gag-Pol polyprotein yielding capsid protein p45 and a Pol-p154 precursor protein. This cleavage is a prerequisite for subsequent processing of Pol-p154 at the remaining sites to release the mature structural and catalytic proteins. Maturation takes place prior to the RT reaction and is required to produce transposition-competent VLPs.

The protein localises to the cytoplasm. It localises to the nucleus. The enzyme catalyses DNA(n) + a 2'-deoxyribonucleoside 5'-triphosphate = DNA(n+1) + diphosphate. It carries out the reaction Endonucleolytic cleavage to 5'-phosphomonoester.. In terms of biological role, capsid protein (CA) is the structural component of the virus-like particle (VLP), forming the shell that encapsulates the retrotransposons dimeric RNA genome. The particles are assembled from trimer-clustered units and there are holes in the capsid shells that allow for the diffusion of macromolecules. CA also has nucleocapsid-like chaperone activity, promoting primer tRNA(i)-Met annealing to the multipartite primer-binding site (PBS), dimerization of Ty1 RNA and initiation of reverse transcription. The aspartyl protease (PR) mediates the proteolytic cleavages of the Gag and Gag-Pol polyproteins after assembly of the VLP. Its function is as follows. Reverse transcriptase/ribonuclease H (RT) is a multifunctional enzyme that catalyzes the conversion of the retro-elements RNA genome into dsDNA within the VLP. The enzyme displays a DNA polymerase activity that can copy either DNA or RNA templates, and a ribonuclease H (RNase H) activity that cleaves the RNA strand of RNA-DNA heteroduplexes during plus-strand synthesis and hydrolyzes RNA primers. The conversion leads to a linear dsDNA copy of the retrotransposon that includes long terminal repeats (LTRs) at both ends. Functionally, integrase (IN) targets the VLP to the nucleus, where a subparticle preintegration complex (PIC) containing at least integrase and the newly synthesized dsDNA copy of the retrotransposon must transit the nuclear membrane. Once in the nucleus, integrase performs the integration of the dsDNA into the host genome. In Saccharomyces cerevisiae (strain ATCC 204508 / S288c) (Baker's yeast), this protein is Transposon Ty1-DR6 Gag-Pol polyprotein (TY1B-DR6).